The chain runs to 557 residues: Dihydroxy-acid dehydratase (557 aa).

Position 49 (Cys-49) interacts with [2Fe-2S] cluster. Asp-81 provides a ligand contact to Mg(2+). A [2Fe-2S] cluster-binding site is contributed by Cys-122. Mg(2+) contacts are provided by Asp-123 and Lys-124. At Lys-124 the chain carries N6-carboxylysine. Cys-194 provides a ligand contact to [2Fe-2S] cluster. Residue Glu-446 participates in Mg(2+) binding. Catalysis depends on Ser-472, which acts as the Proton acceptor.

Belongs to the IlvD/Edd family. As to quaternary structure, homodimer. [2Fe-2S] cluster serves as cofactor. It depends on Mg(2+) as a cofactor.

It catalyses the reaction (2R)-2,3-dihydroxy-3-methylbutanoate = 3-methyl-2-oxobutanoate + H2O. The catalysed reaction is (2R,3R)-2,3-dihydroxy-3-methylpentanoate = (S)-3-methyl-2-oxopentanoate + H2O. The protein operates within amino-acid biosynthesis; L-isoleucine biosynthesis; L-isoleucine from 2-oxobutanoate: step 3/4. Its pathway is amino-acid biosynthesis; L-valine biosynthesis; L-valine from pyruvate: step 3/4. Functions in the biosynthesis of branched-chain amino acids. Catalyzes the dehydration of (2R,3R)-2,3-dihydroxy-3-methylpentanoate (2,3-dihydroxy-3-methylvalerate) into 2-oxo-3-methylpentanoate (2-oxo-3-methylvalerate) and of (2R)-2,3-dihydroxy-3-methylbutanoate (2,3-dihydroxyisovalerate) into 2-oxo-3-methylbutanoate (2-oxoisovalerate), the penultimate precursor to L-isoleucine and L-valine, respectively. This is Dihydroxy-acid dehydratase from Prochlorococcus marinus (strain AS9601).